Reading from the N-terminus, the 993-residue chain is Ephrin type-B receptor 3 (993 aa).

The first 29 residues, 1-29, serve as a signal peptide directing secretion; the sequence is MAGARPPPGLLPLLAPLLLPLLLPAGCWA. At 30 to 554 the chain is on the extracellular side; sequence LEETLMDTKW…AQQLQEQLPL (525 aa). The Eph LBD domain occupies 31–209; sequence EETLMDTKWV…FYKKCASTTA (179 aa). Cys-73 and Cys-191 form a disulfide bridge. 2 Fibronectin type-III domains span residues 331-446 and 447-540; these read VPSP…TNQA and APSE…TTSE. N-linked (GlcNAc...) asparagine glycans are attached at residues Asn-343 and Asn-440. The helical transmembrane segment at 555 to 575 threads the bilayer; that stretch reads IVGSTVAGFVFMVVVVVIALV. Residues 576 to 993 are Cytoplasmic-facing; that stretch reads CLRKQRHGPD…QMNQTLPVQV (418 aa). At Tyr-609 the chain carries Phosphotyrosine; by autocatalysis. One can recognise a Protein kinase domain in the interval 628 to 891; it reads VKIEEVIGAG…QIVNTLDKLI (264 aa). Residues 634-642 and Lys-660 contribute to the ATP site; that span reads IGAGEFGEV. The active-site Proton acceptor is Asp-753. The 65-residue stretch at 920-984 folds into the SAM domain; it reads TTFTTVGDWL…LCSIQDMRLQ (65 aa). The PDZ-binding signature appears at 991 to 993; the sequence is VQV.

The protein belongs to the protein kinase superfamily. Tyr protein kinase family. Ephrin receptor subfamily. As to quaternary structure, heterotetramer upon binding of the ligand. The heterotetramer is composed of an ephrin dimer and a receptor dimer. Oligomerization is probably required to induce biological responses. In terms of processing, phosphorylated. Autophosphorylates upon ligand-binding. Autophosphorylation on Tyr-609 is required for interaction with SH2 domain-containing proteins. Ubiquitinated by RNF186, mainly through 'Lys-48' and 'Lys-63'-linked polyubiquitin chains. As to expression, expressed in cells of the retinal ganglion cell layer during retinal axon guidance to the optic disk. Expressed by Paneth and progenitor cells in the crypts of the intestinal epithelium (at protein level). Expressed in myogenic progenitor cells.

It is found in the cell membrane. It localises to the cell projection. Its subcellular location is the dendrite. The enzyme catalyses L-tyrosyl-[protein] + ATP = O-phospho-L-tyrosyl-[protein] + ADP + H(+). Functionally, receptor tyrosine kinase which binds promiscuously transmembrane ephrin-B family ligands residing on adjacent cells, leading to contact-dependent bidirectional signaling into neighboring cells. The signaling pathway downstream of the receptor is referred to as forward signaling while the signaling pathway downstream of the ephrin ligand is referred to as reverse signaling. Generally has an overlapping and redundant function with EPHB2. Like EPHB2, functions in axon guidance during development regulating for instance the neurons forming the corpus callosum and the anterior commissure, 2 major interhemispheric connections between the temporal lobes of the cerebral cortex. In addition to its role in axon guidance also plays an important redundant role with other ephrin-B receptors in development and maturation of dendritic spines and the formation of excitatory synapses. Controls other aspects of development through regulation of cell migration and positioning. This includes angiogenesis, palate development and thymic epithelium development for instance. Forward and reverse signaling through the EFNB2/EPHB3 complex also regulate migration and adhesion of cells that tubularize the urethra and septate the cloaca. Finally, plays an important role in intestinal epithelium differentiation segregating progenitor from differentiated cells in the crypt. The protein is Ephrin type-B receptor 3 (Ephb3) of Mus musculus (Mouse).